Here is a 298-residue protein sequence, read N- to C-terminus: Acetylglutamate kinase (298 aa).

Substrate-binding positions include 69–70 (GG), arginine 91, and asparagine 196.

Belongs to the acetylglutamate kinase family. ArgB subfamily.

It is found in the cytoplasm. The enzyme catalyses N-acetyl-L-glutamate + ATP = N-acetyl-L-glutamyl 5-phosphate + ADP. Its pathway is amino-acid biosynthesis; L-arginine biosynthesis; N(2)-acetyl-L-ornithine from L-glutamate: step 2/4. In terms of biological role, catalyzes the ATP-dependent phosphorylation of N-acetyl-L-glutamate. The polypeptide is Acetylglutamate kinase (Nitrobacter hamburgensis (strain DSM 10229 / NCIMB 13809 / X14)).